The following is a 90-amino-acid chain: uncharacterized protein (90 aa).

2 consecutive transmembrane segments (helical) span residues 17–37 (ILSMHLSPVSILSPVLLIYLV) and 55–75 (ICFGVSLFLSFFLVRILWGIA).

Its subcellular location is the membrane. This is an uncharacterized protein from Schizosaccharomyces pombe (strain 972 / ATCC 24843) (Fission yeast).